Consider the following 178-residue polypeptide: ATP synthase subunit delta (178 aa).

This sequence belongs to the ATPase delta chain family. F-type ATPases have 2 components, F(1) - the catalytic core - and F(0) - the membrane proton channel. F(1) has five subunits: alpha(3), beta(3), gamma(1), delta(1), epsilon(1). F(0) has three main subunits: a(1), b(2) and c(10-14). The alpha and beta chains form an alternating ring which encloses part of the gamma chain. F(1) is attached to F(0) by a central stalk formed by the gamma and epsilon chains, while a peripheral stalk is formed by the delta and b chains.

It is found in the cell membrane. In terms of biological role, f(1)F(0) ATP synthase produces ATP from ADP in the presence of a proton or sodium gradient. F-type ATPases consist of two structural domains, F(1) containing the extramembraneous catalytic core and F(0) containing the membrane proton channel, linked together by a central stalk and a peripheral stalk. During catalysis, ATP synthesis in the catalytic domain of F(1) is coupled via a rotary mechanism of the central stalk subunits to proton translocation. Functionally, this protein is part of the stalk that links CF(0) to CF(1). It either transmits conformational changes from CF(0) to CF(1) or is implicated in proton conduction. This chain is ATP synthase subunit delta, found in Streptococcus gordonii (strain Challis / ATCC 35105 / BCRC 15272 / CH1 / DL1 / V288).